Consider the following 302-residue polypeptide: Galactofuranosyltransferase GlfT1 (302 aa).

The protein belongs to the glycosyltransferase 2 family.

The protein localises to the cell membrane. It is found in the secreted. Its subcellular location is the cell wall. The enzyme catalyses alpha-L-rhamnosyl-(1-&gt;3)-N-acetyl-alpha-D-glucosaminyl-diphospho-trans,octa-cis-decaprenol + 2 UDP-alpha-D-galactofuranose = beta-D-galactofuranosyl-(1-&gt;5)-beta-D-galactofuranosyl-(1-&gt;4)-alpha-L-rhamnosyl-(1-&gt;3)-N-acetyl-alpha-D-glucosaminyl-diphospho-trans,octa-cis-decaprenol + 2 UDP + 2 H(+). Its pathway is cell wall biogenesis; cell wall polysaccharide biosynthesis. Involved in the biosynthesis of the arabinogalactan (AG) region of the mycolylarabinogalactan-peptidoglycan (mAGP) complex, an essential component of the mycobacterial cell wall. Catalyzes the transfer of the first two galactofuranosyl (Galf) units from UDP-galactofuranose (UDP-Galf) onto the rhamnosyl-GlcNAc-diphospho-decaprenol (Rha-GlcNAc-PP-C50) acceptor, yielding galactofuranosyl-galactofuranosyl-rhamnosyl-GlcNAc-diphospho-decaprenol (Galf-Galf-Rha-GlcNAc-PP-C50). Thus, GlfT1 is the initiator of galactan synthesis, while GlfT2 continues with the subsequent polymerization events. This Mycolicibacterium smegmatis (strain ATCC 700084 / mc(2)155) (Mycobacterium smegmatis) protein is Galactofuranosyltransferase GlfT1.